The chain runs to 255 residues: Type III pantothenate kinase (255 aa).

Asp6 to Val13 contacts ATP. Residues Tyr100 and Gly107–Arg110 each bind substrate. The Proton acceptor role is filled by Asp109. Asp129 is a binding site for K(+). Thr132 lines the ATP pocket. Thr184 is a binding site for substrate.

Belongs to the type III pantothenate kinase family. In terms of assembly, homodimer. It depends on NH4(+) as a cofactor. K(+) serves as cofactor.

It is found in the cytoplasm. It catalyses the reaction (R)-pantothenate + ATP = (R)-4'-phosphopantothenate + ADP + H(+). The protein operates within cofactor biosynthesis; coenzyme A biosynthesis; CoA from (R)-pantothenate: step 1/5. In terms of biological role, catalyzes the phosphorylation of pantothenate (Pan), the first step in CoA biosynthesis. The protein is Type III pantothenate kinase of Syntrophotalea carbinolica (strain DSM 2380 / NBRC 103641 / GraBd1) (Pelobacter carbinolicus).